The primary structure comprises 114 residues: Non-specific lipid-transfer protein 2 (114 aa).

The N-terminal stretch at methionine 1–glutamate 23 is a signal peptide. 4 cysteine pairs are disulfide-bonded: cysteine 27/cysteine 73, cysteine 37/cysteine 50, cysteine 51/cysteine 96, and cysteine 71/cysteine 110.

This sequence belongs to the plant LTP family.

Functionally, plant non-specific lipid-transfer proteins transfer phospholipids as well as galactolipids across membranes. May play a role in wax or cutin deposition in the cell walls of expanding epidermal cells and certain secretory tissues. The chain is Non-specific lipid-transfer protein 2 (LTP2) from Solanum pennellii (Tomato).